Consider the following 252-residue polypeptide: Chitooligosaccharide deacetylase (252 aa).

Residues histidine 61 and histidine 125 each coordinate Mg(2+).

It belongs to the YdjC deacetylase family. ChbG subfamily. In terms of assembly, homodimer. The cofactor is Mg(2+).

It is found in the cytoplasm. The catalysed reaction is N,N'-diacetylchitobiose + H2O = N-acetyl-beta-D-glucosaminyl-(1-&gt;4)-D-glucosamine + acetate. It carries out the reaction diacetylchitobiose-6'-phosphate + H2O = N'-monoacetylchitobiose-6'-phosphate + acetate. Its pathway is glycan degradation; chitin degradation. Functionally, involved in the degradation of chitin. ChbG is essential for growth on the acetylated chitooligosaccharides chitobiose and chitotriose but is dispensable for growth on cellobiose and chitosan dimer, the deacetylated form of chitobiose. Deacetylation of chitobiose-6-P and chitotriose-6-P is necessary for both the activation of the chb promoter by the regulatory protein ChbR and the hydrolysis of phosphorylated beta-glucosides by the phospho-beta-glucosidase ChbF. Catalyzes the removal of only one acetyl group from chitobiose-6-P to yield monoacetylchitobiose-6-P, the inducer of ChbR and the substrate of ChbF. The chain is Chitooligosaccharide deacetylase from Escherichia fergusonii (strain ATCC 35469 / DSM 13698 / CCUG 18766 / IAM 14443 / JCM 21226 / LMG 7866 / NBRC 102419 / NCTC 12128 / CDC 0568-73).